The sequence spans 249 residues: 3-deoxy-D-manno-octulosonic acid kinase (249 aa).

Asp175 is an active-site residue.

The protein belongs to the protein kinase superfamily. KdkA/RfaP family.

It is found in the cell inner membrane. It catalyses the reaction an alpha-Kdo-(2-&gt;6)-lipid IVA + ATP = a 4-O-phospho-alpha-Kdo-(2-&gt;6)-lipid IVA + ADP + H(+). It participates in bacterial outer membrane biogenesis; LPS core biosynthesis. Functionally, catalyzes the ATP-dependent phosphorylation of the 3-deoxy-D-manno-octulosonic acid (Kdo) residue in Kdo-lipid IV(A) at the 4-OH position. This Xanthomonas oryzae pv. oryzae (strain PXO99A) protein is 3-deoxy-D-manno-octulosonic acid kinase.